The chain runs to 68 residues: Phylloseptin-SP1 (68 aa).

A signal peptide spans 1-22 (MAFLKKSLFLVLFLGLVSLSIC). The propeptide occupies 23 to 45 (EEKERETKEEENEQEDDNREEKR). Leucine amide is present on L67.

In terms of tissue distribution, expressed by the skin glands.

The protein resides in the secreted. Its function is as follows. Weak cationic amphipathic alpha-helical antimicrobial peptide with weak activity against Gram-positive and Gram-negative bacteria and fungi. Has been tested against E.coli (MIC&gt;217.69 uM), S.aureus (MIC&gt;217.69 uM), K.pneumoniae (MIC&gt;189.00 uM) and C.albicans (MIC&gt;217.69 uM). Shows a moderate hemolytic activity. In Agalychnis spurrelli (Gliding leaf frog), this protein is Phylloseptin-SP1.